Reading from the N-terminus, the 346-residue chain is Protein RecA (346 aa).

65–72 lines the ATP pocket; it reads GPESSGKT.

This sequence belongs to the RecA family.

The protein resides in the cytoplasm. Functionally, can catalyze the hydrolysis of ATP in the presence of single-stranded DNA, the ATP-dependent uptake of single-stranded DNA by duplex DNA, and the ATP-dependent hybridization of homologous single-stranded DNAs. It interacts with LexA causing its activation and leading to its autocatalytic cleavage. The sequence is that of Protein RecA from Pseudomonas aeruginosa (strain UCBPP-PA14).